Consider the following 140-residue polypeptide: Large ribosomal subunit protein bL17 (140 aa).

The protein belongs to the bacterial ribosomal protein bL17 family. As to quaternary structure, part of the 50S ribosomal subunit. Contacts protein L32.

The sequence is that of Large ribosomal subunit protein bL17 from Rhizobium rhizogenes (strain K84 / ATCC BAA-868) (Agrobacterium radiobacter).